The chain runs to 187 residues: Large ribosomal subunit protein uL10 (187 aa).

It belongs to the universal ribosomal protein uL10 family. Part of the ribosomal stalk of the 50S ribosomal subunit. The N-terminus interacts with L11 and the large rRNA to form the base of the stalk. The C-terminus forms an elongated spine to which L12 dimers bind in a sequential fashion forming a multimeric L10(L12)X complex.

Its function is as follows. Forms part of the ribosomal stalk, playing a central role in the interaction of the ribosome with GTP-bound translation factors. In Synechococcus sp. (strain JA-3-3Ab) (Cyanobacteria bacterium Yellowstone A-Prime), this protein is Large ribosomal subunit protein uL10.